A 354-amino-acid chain; its full sequence is Selenide, water dikinase (354 aa).

The active site involves Cys-23. Residues Lys-26 and 54–56 (TSD) each bind ATP. Residue Asp-57 coordinates Mg(2+). Residues Asp-74, Asp-97, and 145-147 (GHS) contribute to the ATP site. Asp-97 provides a ligand contact to Mg(2+). Asp-233 is a binding site for Mg(2+).

This sequence belongs to the selenophosphate synthase 1 family. Class I subfamily. In terms of assembly, homodimer. Mg(2+) serves as cofactor.

It catalyses the reaction hydrogenselenide + ATP + H2O = selenophosphate + AMP + phosphate + 2 H(+). Functionally, synthesizes selenophosphate from selenide and ATP. In Burkholderia pseudomallei (strain K96243), this protein is Selenide, water dikinase.